Reading from the N-terminus, the 438-residue chain is Xylose isomerase (438 aa).

Active-site residues include H100 and D103. Mg(2+) contacts are provided by E231, E267, H270, D295, D306, D308, and D338.

It belongs to the xylose isomerase family. Homotetramer. The cofactor is Mg(2+).

Its subcellular location is the cytoplasm. The catalysed reaction is alpha-D-xylose = alpha-D-xylulofuranose. This Pseudomonas savastanoi pv. phaseolicola (strain 1448A / Race 6) (Pseudomonas syringae pv. phaseolicola (strain 1448A / Race 6)) protein is Xylose isomerase.